Consider the following 417-residue polypeptide: Serine hydroxymethyltransferase (417 aa).

(6S)-5,6,7,8-tetrahydrofolate is bound by residues Leu-121 and 125–127; that span reads GHL. An N6-(pyridoxal phosphate)lysine modification is found at Lys-229. Residue 355 to 357 participates in (6S)-5,6,7,8-tetrahydrofolate binding; that stretch reads SPF.

Belongs to the SHMT family. In terms of assembly, homodimer. It depends on pyridoxal 5'-phosphate as a cofactor.

The protein resides in the cytoplasm. The enzyme catalyses (6R)-5,10-methylene-5,6,7,8-tetrahydrofolate + glycine + H2O = (6S)-5,6,7,8-tetrahydrofolate + L-serine. Its pathway is one-carbon metabolism; tetrahydrofolate interconversion. It participates in amino-acid biosynthesis; glycine biosynthesis; glycine from L-serine: step 1/1. Functionally, catalyzes the reversible interconversion of serine and glycine with tetrahydrofolate (THF) serving as the one-carbon carrier. This reaction serves as the major source of one-carbon groups required for the biosynthesis of purines, thymidylate, methionine, and other important biomolecules. Also exhibits THF-independent aldolase activity toward beta-hydroxyamino acids, producing glycine and aldehydes, via a retro-aldol mechanism. This chain is Serine hydroxymethyltransferase, found in Photorhabdus laumondii subsp. laumondii (strain DSM 15139 / CIP 105565 / TT01) (Photorhabdus luminescens subsp. laumondii).